The sequence spans 496 residues: Lysine--tRNA ligase (496 aa).

Positions 409 and 416 each coordinate Mg(2+).

The protein belongs to the class-II aminoacyl-tRNA synthetase family. As to quaternary structure, homodimer. Mg(2+) serves as cofactor.

Its subcellular location is the cytoplasm. The enzyme catalyses tRNA(Lys) + L-lysine + ATP = L-lysyl-tRNA(Lys) + AMP + diphosphate. The sequence is that of Lysine--tRNA ligase from Streptococcus pneumoniae (strain Hungary19A-6).